The sequence spans 266 residues: uncharacterized protein (266 aa).

It belongs to the chlamydial CPn_0087/CT3_09/TC_0583 family.

This is an uncharacterized protein from Chlamydia muridarum (strain MoPn / Nigg).